A 564-amino-acid polypeptide reads, in one-letter code: Arginine--tRNA ligase (564 aa).

The 'HIGH' region signature appears at 124–134 (PNIAKDMHVGH).

It belongs to the class-I aminoacyl-tRNA synthetase family. In terms of assembly, monomer.

The protein localises to the cytoplasm. It catalyses the reaction tRNA(Arg) + L-arginine + ATP = L-arginyl-tRNA(Arg) + AMP + diphosphate. This chain is Arginine--tRNA ligase, found in Chlamydia caviae (strain ATCC VR-813 / DSM 19441 / 03DC25 / GPIC) (Chlamydophila caviae).